The primary structure comprises 700 residues: Polyribonucleotide nucleotidyltransferase (700 aa).

The Mg(2+) site is built by aspartate 484 and aspartate 490. The KH domain occupies proline 551 to isoleucine 610. In terms of domain architecture, S1 motif spans glycine 620–lysine 688.

The protein belongs to the polyribonucleotide nucleotidyltransferase family. Requires Mg(2+) as cofactor.

The protein resides in the cytoplasm. It catalyses the reaction RNA(n+1) + phosphate = RNA(n) + a ribonucleoside 5'-diphosphate. Involved in mRNA degradation. Catalyzes the phosphorolysis of single-stranded polyribonucleotides processively in the 3'- to 5'-direction. This is Polyribonucleotide nucleotidyltransferase from Thermoanaerobacter pseudethanolicus (strain ATCC 33223 / 39E) (Clostridium thermohydrosulfuricum).